Reading from the N-terminus, the 628-residue chain is Nuclear receptor subfamily 4 group A member 3 (628 aa).

The interval 1-112 (MPCVQAQYSP…HHHHHHHHHH (112 aa)) is activation function (AF)-1 domain. Residues 1-140 (MPCVQAQYSP…PSTSMYFKQS (140 aa)) form a required for DNA-PK heterotrimer region. An interaction with NCOA1, NCOA2, NCOA3 and KAT2B region spans residues 1-293 (MPCVQAQYSP…NRSSSSGEGT (293 aa)). Disordered regions lie at residues 96–163 (HGYH…DELP) and 269–290 (ASSL…SSSG). Basic residues predominate over residues 97–113 (GYHHHHHHHHHHHHHHQ). Positions 142-151 (PSTPTTPGFP) are enriched in pro residues. Residues 270-289 (SSLLGESPSLPSPPNRSSSS) show a composition bias toward low complexity. Positions 291–366 (EGTCAVCGDN…VGMVKEVVRT (76 aa)) form a DNA-binding region, nuclear receptor. 2 NR C4-type zinc fingers span residues 294–314 (CAVC…CEGC) and 330–354 (CLAN…FQKC). Residues 366–396 (TDSLKGRRGRLPSKPKSPLQQEPSQPSPPSP) form a disordered region. Positions 379–389 (KPKSPLQQEPS) are enriched in low complexity. Residues 381-628 (KSPLQQEPSQ…DKLFLDTLPF (248 aa)) are interaction with KAT2B. The NR LBD domain occupies 396 to 625 (PPICMMNALV…SVIDKLFLDT (230 aa)).

This sequence belongs to the nuclear hormone receptor family. NR4 subfamily. As to quaternary structure, interacts with SIX3 (via homeobox); differentially regulates the transcriptional activities of NR4A3. Interacts with NR3C1 (via nuclear receptor DNA-binding domain); the interactions represses transcription activity of NR4A3 on the POMC promoter Nur response element (NurRE). Interacts with TRIM28; the interactions potentiates NR4A3 activity on NurRE promoter. Binds DNA as a monomer and homodimer. Interacts with PARP1; activates PARP1 by improving acetylation of PARP1 and suppressing the interaction between PARP1 and SIRT1. Interacts with the constituents of DNA-PK heterotrimer PRKDC, XRCC6 and XRCC5; phosphorylates and prevents NR4A3 ubiquitinylation and degradation. Interacts with NCOA2; potentiates the activity of the NR4A3. Interacts with NCOA1, NCOA3, MED1 and KAT2B. Interacts with EP300 and NCOA2; mediates the recruitment of MED1 in the coactivator complex. In terms of processing, phosphorylated by PRKDC. As to expression, expressed at high levels in cultured apoptotic neuronal cells and fetal brain, and at low level in adult brain.

It localises to the nucleus. Transcriptional activator that binds to regulatory elements in promoter regions in a cell- and response element (target)-specific manner. Induces gene expression by binding as monomers to the NR4A1 response element (NBRE) 5'-AAAAGGTCA-3' site and as homodimers to the Nur response element (NurRE) site in the promoter of their regulated target genes. Plays a role in the regulation of proliferation, survival and differentiation of many different cell types and also in metabolism and inflammation. Mediates proliferation of vascular smooth muscle, myeloid progenitor cell and type B pancreatic cells; promotes mitogen-induced vascular smooth muscle cell proliferation through transactivation of SKP2 promoter by binding a NBRE site. Upon PDGF stimulation, stimulates vascular smooth muscle cell proliferation by regulating CCND1 and CCND2 expression. In islets, induces type B pancreatic cell proliferation through up-regulation of genes that activate cell cycle, as well as genes that cause degradation of the CDKN1A. Negatively regulates myeloid progenitor cell proliferation by repressing RUNX1 in a NBRE site-independent manner. During inner ear, plays a role as a key mediator of the proliferative growth phase of semicircular canal development. Also mediates survival of neuron and smooth muscle cells; mediates CREB-induced neuronal survival, and during hippocampus development, plays a critical role in pyramidal cell survival and axonal guidance. Is required for S phase entry of the cell cycle and survival of smooth muscle cells by inducing CCND1, resulting in RB1 phosphorylation. Binds to NBRE motif in CCND1 promoter, resulting in the activation of the promoter and CCND1 transcription. Also plays a role in inflammation; Upon TNF stimulation, mediates monocyte adhesion by inducing the expression of VCAM1 and ICAM1 by binding to the NBRE consensus site. In mast cells activated by Fc-epsilon receptor cross-linking, promotes the synthesis and release of cytokines but impairs events leading to degranulation. Also plays a role in metabolism; by modulating feeding behavior; and by playing a role in energy balance by inhibiting the glucocorticoid-induced orexigenic neuropeptides AGRP expression, at least in part by forming a complex with activated NR3C1 on the AGRP-glucocorticoid response element (GRE), and thus weakening the DNA binding activity of NR3C1. Upon catecholamines stimulation, regulates gene expression that controls oxidative metabolism in skeletal muscle. Plays a role in glucose transport by regulating translocation of the SLC2A4 glucose transporter to the cell surface. Finally, during gastrulation plays a crucial role in the formation of anterior mesoderm by controlling cell migration. Also participates in cardiac hypertrophy by activating PARP1. This is Nuclear receptor subfamily 4 group A member 3 (Nr4a3) from Rattus norvegicus (Rat).